Reading from the N-terminus, the 121-residue chain is Large ribosomal subunit protein uL14 (121 aa).

Belongs to the universal ribosomal protein uL14 family. As to quaternary structure, part of the 50S ribosomal subunit. Forms a cluster with proteins L3 and L19. In the 70S ribosome, L14 and L19 interact and together make contacts with the 16S rRNA in bridges B5 and B8.

Functionally, binds to 23S rRNA. Forms part of two intersubunit bridges in the 70S ribosome. The chain is Large ribosomal subunit protein uL14 from Akkermansia muciniphila (strain ATCC BAA-835 / DSM 22959 / JCM 33894 / BCRC 81048 / CCUG 64013 / CIP 107961 / Muc).